The primary structure comprises 204 residues: Putative rubrerythrin (204 aa).

The Ferritin-like diiron domain maps to 1–159 (MINNFFVINM…KLLKEVEEGT (159 aa)). Residues glutamate 24, glutamate 57, glutamate 107, glutamate 110, glutamate 141, histidine 144, cysteine 171, cysteine 174, cysteine 187, and cysteine 190 each coordinate Fe(3+). One can recognise a Rubredoxin-like domain in the interval 166–204 (PVEWVCRKCGFVHLGKEPPEKCPSCSHPRKYFEVKCEKY).

Homodimer. Possesses two rubredoxin-like centers and two non-sulfur oxo-bridged di-iron centers per dimer. Fe(3+) serves as cofactor.

The protein resides in the cytoplasm. In terms of biological role, may provide oxidative stress protection via catalytic reduction of intracellular hydrogen peroxide. This chain is Putative rubrerythrin, found in Methanocaldococcus jannaschii (strain ATCC 43067 / DSM 2661 / JAL-1 / JCM 10045 / NBRC 100440) (Methanococcus jannaschii).